Consider the following 503-residue polypeptide: Phenylalanine--tRNA ligase alpha subunit (503 aa).

Ser2 bears the N-acetylserine mark. The segment at 2 to 173 (SDFQLEILKK…KRKLIAQGKI (172 aa)) is contains the major tRNA-Phe binding sites. L-phenylalanine contacts are provided by residues Thr333, 374-376 (QVE), and Tyr414. Glu416 is a Mg(2+) binding site. Residue Phe440 coordinates L-phenylalanine.

This sequence belongs to the class-II aminoacyl-tRNA synthetase family. Phe-tRNA synthetase alpha subunit type 2 subfamily. Tetramer of two alpha and two beta subunits. Mg(2+) serves as cofactor.

The protein localises to the cytoplasm. The catalysed reaction is tRNA(Phe) + L-phenylalanine + ATP = L-phenylalanyl-tRNA(Phe) + AMP + diphosphate + H(+). The sequence is that of Phenylalanine--tRNA ligase alpha subunit (FRS2) from Saccharomyces cerevisiae (strain ATCC 204508 / S288c) (Baker's yeast).